The primary structure comprises 385 residues: 1-deoxy-D-xylulose 5-phosphate reductoisomerase (385 aa).

Positions 13, 14, 15, 16, 40, and 122 each coordinate NADPH. Lysine 123 contributes to the 1-deoxy-D-xylulose 5-phosphate binding site. Residue glutamate 124 participates in NADPH binding. Aspartate 148 lines the Mn(2+) pocket. Residues serine 149, glutamate 150, serine 177, and histidine 200 each coordinate 1-deoxy-D-xylulose 5-phosphate. Glutamate 150 serves as a coordination point for Mn(2+). Glycine 206 provides a ligand contact to NADPH. Serine 213, asparagine 218, lysine 219, and glutamate 222 together coordinate 1-deoxy-D-xylulose 5-phosphate. Glutamate 222 contributes to the Mn(2+) binding site.

This sequence belongs to the DXR family. Mg(2+) is required as a cofactor. Requires Mn(2+) as cofactor.

The enzyme catalyses 2-C-methyl-D-erythritol 4-phosphate + NADP(+) = 1-deoxy-D-xylulose 5-phosphate + NADPH + H(+). It functions in the pathway isoprenoid biosynthesis; isopentenyl diphosphate biosynthesis via DXP pathway; isopentenyl diphosphate from 1-deoxy-D-xylulose 5-phosphate: step 1/6. Catalyzes the NADPH-dependent rearrangement and reduction of 1-deoxy-D-xylulose-5-phosphate (DXP) to 2-C-methyl-D-erythritol 4-phosphate (MEP). The polypeptide is 1-deoxy-D-xylulose 5-phosphate reductoisomerase (Francisella tularensis subsp. tularensis (strain WY96-3418)).